We begin with the raw amino-acid sequence, 831 residues long: DNA ligase (831 aa).

Residues 34–38 (DADYD), 83–84 (SL), and Glu114 contribute to the NAD(+) site. Lys116 serves as the catalytic N6-AMP-lysine intermediate. The NAD(+) site is built by Arg137, Glu174, Lys291, and Lys315. Residues Cys409, Cys412, Cys427, and Cys433 each contribute to the Zn(2+) site. In terms of domain architecture, BRCT spans 749–831 (AHTAPLNGQS…LAFLGQYSAQ (83 aa)).

Belongs to the NAD-dependent DNA ligase family. LigA subfamily. Mg(2+) serves as cofactor. Requires Mn(2+) as cofactor.

It carries out the reaction NAD(+) + (deoxyribonucleotide)n-3'-hydroxyl + 5'-phospho-(deoxyribonucleotide)m = (deoxyribonucleotide)n+m + AMP + beta-nicotinamide D-nucleotide.. Functionally, DNA ligase that catalyzes the formation of phosphodiester linkages between 5'-phosphoryl and 3'-hydroxyl groups in double-stranded DNA using NAD as a coenzyme and as the energy source for the reaction. It is essential for DNA replication and repair of damaged DNA. The sequence is that of DNA ligase from Xylella fastidiosa (strain 9a5c).